The sequence spans 216 residues: Endo-1,4-beta-xylanase 2 (216 aa).

The first 27 residues, 1-27, serve as a signal peptide directing secretion; the sequence is MVSFSSLFVAACAAVTAFALPNELEKR. The region spanning 28–216 is the GH11 domain; that stretch reads AITSNEQGTN…SSGSASITVS (189 aa). Residue Asn-87 is glycosylated (N-linked (GlcNAc...) asparagine). The active-site Nucleophile is the Glu-112. Glu-203 acts as the Proton donor in catalysis.

This sequence belongs to the glycosyl hydrolase 11 (cellulase G) family.

The protein localises to the secreted. The catalysed reaction is Endohydrolysis of (1-&gt;4)-beta-D-xylosidic linkages in xylans.. It functions in the pathway glycan degradation; xylan degradation. Endo-1,4-beta-xylanase involved in the hydrolysis of xylan, a major structural heterogeneous polysaccharide found in plant biomass representing the second most abundant polysaccharide in the biosphere, after cellulose. The chain is Endo-1,4-beta-xylanase 2 (xyn2) from Rhizopus oryzae (Mucormycosis agent).